A 361-amino-acid polypeptide reads, in one-letter code: POU domain, class 3, transcription factor 4-A (361 aa).

Disordered regions lie at residues 100-131 (HVNHHSPHTNHPNAWGASPAHNSSLTSSGQPI), 150-189 (LTPPLPAGTTQSLHPVLREPNDHVDLGSHHCQDHSDEETP), and 333-361 (EKRMTPPGDPQQHEVYSHSVKTDTSCNEL). Positions 119-131 (AHNSSLTSSGQPI) are enriched in polar residues. The segment covering 165-183 (VLREPNDHVDLGSHHCQDH) has biased composition (basic and acidic residues). Positions 186 to 260 (EETPTSDELE…LLNKWLEEAD (75 aa)) constitute a POU-specific domain. Residues 278–337 (KRKKRTSIEVSVKGVLETHFLKCPKPAALEITSLADSLQLEKEVVRVWFCNRRQKEKRMT) constitute a DNA-binding region (homeobox).

This sequence belongs to the POU transcription factor family. Class-3 subfamily. From embryonic stage 10, expressed in the Spemann's organizer. During gastrulation, expressed in both the involuting mesoderm and the overlying neuroectoderm. During the neural plate and neural fold stages, expressed in the entire neuroectoderm with expression in discrete regions of the developing nervous system persisting at later stages. Transiently expressed in the pronephros from stages 24-32. In adults, expressed in the kidney and brain.

It localises to the nucleus. Its function is as follows. Transcriptional activator. Induces neural-specific gene expression to act as a key regulator of neural differentiation. The protein is POU domain, class 3, transcription factor 4-A (pou3f4-a) of Xenopus laevis (African clawed frog).